The primary structure comprises 825 residues: Ubiquitin carboxyl-terminal hydrolase 16 (825 aa).

Positions 1 to 20 are disordered; sequence MGKKRTKGRSAPDTVASESA. The UBP-type zinc-finger motif lies at 22–141; that stretch reads PVCRHLRKGL…QVVDYVRKQA (120 aa). Residues Cys-24, His-26, Cys-48, Cys-51, Cys-73, Cys-76, Cys-81, His-89, His-93, His-102, Cys-115, and Cys-118 each contribute to the Zn(2+) site. Lys-139 is covalently cross-linked (Glycyl lysine isopeptide (Lys-Gly) (interchain with G-Cter in SUMO2)). The segment covering 164-180 has biased composition (basic and acidic residues); that stretch reads EKESKNEQEREKSENLA. The interval 164-184 is disordered; it reads EKESKNEQEREKSENLAKETI. Position 188 is a phosphoserine (Ser-188). Positions 195-824 constitute a USP domain; the sequence is KGLSNLGNTC…QAYLLFYERI (630 aa). The Nucleophile role is filled by Cys-204. The span at 393 to 407 shows a compositional bias: basic and acidic residues; it reads SGKKSINDKNVKMTM. Residues 393 to 456 form a disordered region; that stretch reads SGKKSINDKN…KQAKNQRRQQ (64 aa). Residues 408 to 419 are compositionally biased toward acidic residues; sequence EEEDKDSEEEKD. Ser-414 carries the phosphoserine modification. Over residues 436 to 456 the composition is skewed to basic residues; that stretch reads HLQKKAKKQAKKQAKNQRRQQ. 2 positions are modified to phosphoserine: Ser-520 and Ser-531. His-759 functions as the Proton acceptor in the catalytic mechanism.

It belongs to the peptidase C19 family. USP16 subfamily. In terms of assembly, homotetramer. Associates with late pre-40S ribosomes. Interacts with CEP78; promoting deubiquitination of tektins. In terms of processing, phosphorylated at the onset of mitosis and dephosphorylated during the metaphase/anaphase transition. Phosphorylation by AURKB enhances the deubiquitinase activity.

Its subcellular location is the nucleus. It is found in the cytoplasm. The catalysed reaction is Thiol-dependent hydrolysis of ester, thioester, amide, peptide and isopeptide bonds formed by the C-terminal Gly of ubiquitin (a 76-residue protein attached to proteins as an intracellular targeting signal).. Specifically deubiquitinates 'Lys-120' of histone H2A (H2AK119Ub), a specific tag for epigenetic transcriptional repression, thereby acting as a coactivator. Deubiquitination of histone H2A is a prerequisite for subsequent phosphorylation at 'Ser-11' of histone H3 (H3S10ph), and is required for chromosome segregation when cells enter into mitosis. In resting B- and T-lymphocytes, phosphorylation by AURKB leads to enhance its activity, thereby maintaining transcription in resting lymphocytes. Regulates Hox gene expression via histone H2A deubiquitination. Prefers nucleosomal substrates. Does not deubiquitinate histone H2B. Also deubiquitinates non-histone proteins, such as ribosomal protein RPS27A: deubiquitination of monoubiquitinated RPS27A promotes maturation of the 40S ribosomal subunit. Also mediates deubiquitination of tektin proteins (TEKT1, TEKT2, TEK3, TEKT4 and TEKT5), promoting their stability. The polypeptide is Ubiquitin carboxyl-terminal hydrolase 16 (Usp16) (Mus musculus (Mouse)).